Here is a 287-residue protein sequence, read N- to C-terminus: Nucleotide-binding protein Ppro_0977 (287 aa).

Residue 8 to 15 (GMSGSGKS) participates in ATP binding. Position 59-62 (59-62 (DIRG)) interacts with GTP.

Belongs to the RapZ-like family.

In terms of biological role, displays ATPase and GTPase activities. The sequence is that of Nucleotide-binding protein Ppro_0977 from Pelobacter propionicus (strain DSM 2379 / NBRC 103807 / OttBd1).